Here is a 640-residue protein sequence, read N- to C-terminus: 1-deoxy-D-xylulose-5-phosphate synthase (640 aa).

Residues His-77 and 118-120 (AHA) contribute to the thiamine diphosphate site. Asp-149 is a Mg(2+) binding site. Residues 150–151 (GS), Asn-178, Tyr-287, and Glu-369 each bind thiamine diphosphate. Position 178 (Asn-178) interacts with Mg(2+).

The protein belongs to the transketolase family. DXPS subfamily. As to quaternary structure, homodimer. The cofactor is Mg(2+). It depends on thiamine diphosphate as a cofactor.

It catalyses the reaction D-glyceraldehyde 3-phosphate + pyruvate + H(+) = 1-deoxy-D-xylulose 5-phosphate + CO2. The protein operates within metabolic intermediate biosynthesis; 1-deoxy-D-xylulose 5-phosphate biosynthesis; 1-deoxy-D-xylulose 5-phosphate from D-glyceraldehyde 3-phosphate and pyruvate: step 1/1. Functionally, catalyzes the acyloin condensation reaction between C atoms 2 and 3 of pyruvate and glyceraldehyde 3-phosphate to yield 1-deoxy-D-xylulose-5-phosphate (DXP). This is 1-deoxy-D-xylulose-5-phosphate synthase from Caulobacter vibrioides (strain NA1000 / CB15N) (Caulobacter crescentus).